The following is a 454-amino-acid chain: tRNA(Ile)-lysidine synthase (454 aa).

31 to 36 (SGGADS) is a binding site for ATP.

The protein belongs to the tRNA(Ile)-lysidine synthase family.

The protein resides in the cytoplasm. It catalyses the reaction cytidine(34) in tRNA(Ile2) + L-lysine + ATP = lysidine(34) in tRNA(Ile2) + AMP + diphosphate + H(+). In terms of biological role, ligates lysine onto the cytidine present at position 34 of the AUA codon-specific tRNA(Ile) that contains the anticodon CAU, in an ATP-dependent manner. Cytidine is converted to lysidine, thus changing the amino acid specificity of the tRNA from methionine to isoleucine. The protein is tRNA(Ile)-lysidine synthase of Porphyromonas gingivalis (strain ATCC 33277 / DSM 20709 / CIP 103683 / JCM 12257 / NCTC 11834 / 2561).